The sequence spans 365 residues: S-adenosylmethionine:tRNA ribosyltransferase-isomerase (365 aa).

The protein belongs to the QueA family. Monomer.

The protein resides in the cytoplasm. It catalyses the reaction 7-aminomethyl-7-carbaguanosine(34) in tRNA + S-adenosyl-L-methionine = epoxyqueuosine(34) in tRNA + adenine + L-methionine + 2 H(+). The protein operates within tRNA modification; tRNA-queuosine biosynthesis. Functionally, transfers and isomerizes the ribose moiety from AdoMet to the 7-aminomethyl group of 7-deazaguanine (preQ1-tRNA) to give epoxyqueuosine (oQ-tRNA). The chain is S-adenosylmethionine:tRNA ribosyltransferase-isomerase from Prochlorococcus marinus (strain NATL2A).